A 305-amino-acid chain; its full sequence is Probable GTP 3',8-cyclase (305 aa).

The region spanning 6–233 is the Radical SAM core domain; it reads RHGRPVMSLR…MQDRKKYYID (228 aa). Position 15 (arginine 15) interacts with GTP. [4Fe-4S] cluster is bound by residues cysteine 22 and cysteine 26. S-adenosyl-L-methionine is bound at residue tyrosine 28. Cysteine 29 contributes to the [4Fe-4S] cluster binding site. Arginine 62 serves as a coordination point for GTP. Glycine 66 contacts S-adenosyl-L-methionine. Threonine 92 provides a ligand contact to GTP. Serine 116 provides a ligand contact to S-adenosyl-L-methionine. Lysine 153 is a binding site for GTP. Residues cysteine 249 and cysteine 252 each contribute to the [4Fe-4S] cluster site. 254-256 serves as a coordination point for GTP; sequence RLR. Cysteine 266 serves as a coordination point for [4Fe-4S] cluster.

This sequence belongs to the radical SAM superfamily. MoaA family. [4Fe-4S] cluster is required as a cofactor.

The enzyme catalyses GTP + AH2 + S-adenosyl-L-methionine = (8S)-3',8-cyclo-7,8-dihydroguanosine 5'-triphosphate + 5'-deoxyadenosine + L-methionine + A + H(+). The protein operates within cofactor biosynthesis; molybdopterin biosynthesis. Catalyzes the cyclization of GTP to (8S)-3',8-cyclo-7,8-dihydroguanosine 5'-triphosphate. In Methanothermobacter thermautotrophicus (strain ATCC 29096 / DSM 1053 / JCM 10044 / NBRC 100330 / Delta H) (Methanobacterium thermoautotrophicum), this protein is Probable GTP 3',8-cyclase.